A 337-amino-acid chain; its full sequence is Methionyl-tRNA formyltransferase (337 aa).

116-119 (SILP) is a binding site for (6S)-5,6,7,8-tetrahydrofolate.

The protein belongs to the Fmt family.

It carries out the reaction L-methionyl-tRNA(fMet) + (6R)-10-formyltetrahydrofolate = N-formyl-L-methionyl-tRNA(fMet) + (6S)-5,6,7,8-tetrahydrofolate + H(+). Functionally, attaches a formyl group to the free amino group of methionyl-tRNA(fMet). The formyl group appears to play a dual role in the initiator identity of N-formylmethionyl-tRNA by promoting its recognition by IF2 and preventing the misappropriation of this tRNA by the elongation apparatus. The polypeptide is Methionyl-tRNA formyltransferase (Desulfovibrio desulfuricans (strain ATCC 27774 / DSM 6949 / MB)).